Here is a 1028-residue protein sequence, read N- to C-terminus: Carbamoyl phosphate synthase large chain (1028 aa).

Positions 1 to 409 (MPPRRDLKKI…ALMKALRGLE (409 aa)) are carboxyphosphate synthetic domain. Residues Arg-129, Arg-169, Gly-175, Gly-176, Glu-208, Val-210, Glu-215, Gly-241, Val-242, His-243, Gln-285, and Glu-299 each coordinate ATP. Residues 133 to 328 (QEAMQRIGLE…IAKIAALLAV (196 aa)) form the ATP-grasp 1 domain. Gln-285, Glu-299, and Asn-301 together coordinate Mg(2+). The Mn(2+) site is built by Gln-285, Glu-299, and Asn-301. Positions 410–549 (RDVRALAGVR…YSTYELEDEV (140 aa)) are oligomerization domain. Residues 550 to 933 (WPSQKPKVVI…AYYKAELGAG (384 aa)) are carbamoyl phosphate synthetic domain. In terms of domain architecture, ATP-grasp 2 spans 674–866 (HALCQRLGIP…LAKLAALIAV (193 aa)). The ATP site is built by Arg-710, Arg-750, Leu-752, Glu-757, Gly-782, Val-783, His-784, Ser-785, Gln-825, and Glu-837. Gln-825, Glu-837, and Asn-839 together coordinate Mg(2+). Mn(2+) is bound by residues Gln-825, Glu-837, and Asn-839. The region spanning 934–1028 (QRLPLSGRVR…QDWHQKAPRG (95 aa)) is the MGS-like domain. The tract at residues 934–1028 (QRLPLSGRVR…QDWHQKAPRG (95 aa)) is allosteric domain.

The protein belongs to the CarB family. In terms of assembly, composed of two chains; the small (or glutamine) chain promotes the hydrolysis of glutamine to ammonia, which is used by the large (or ammonia) chain to synthesize carbamoyl phosphate. Tetramer of heterodimers (alpha,beta)4. It depends on Mg(2+) as a cofactor. The cofactor is Mn(2+).

It carries out the reaction hydrogencarbonate + L-glutamine + 2 ATP + H2O = carbamoyl phosphate + L-glutamate + 2 ADP + phosphate + 2 H(+). The enzyme catalyses hydrogencarbonate + NH4(+) + 2 ATP = carbamoyl phosphate + 2 ADP + phosphate + 2 H(+). It participates in amino-acid biosynthesis; L-arginine biosynthesis; carbamoyl phosphate from bicarbonate: step 1/1. Its pathway is pyrimidine metabolism; UMP biosynthesis via de novo pathway; (S)-dihydroorotate from bicarbonate: step 1/3. Large subunit of the glutamine-dependent carbamoyl phosphate synthetase (CPSase). CPSase catalyzes the formation of carbamoyl phosphate from the ammonia moiety of glutamine, carbonate, and phosphate donated by ATP, constituting the first step of 2 biosynthetic pathways, one leading to arginine and/or urea and the other to pyrimidine nucleotides. The large subunit (synthetase) binds the substrates ammonia (free or transferred from glutamine from the small subunit), hydrogencarbonate and ATP and carries out an ATP-coupled ligase reaction, activating hydrogencarbonate by forming carboxy phosphate which reacts with ammonia to form carbamoyl phosphate. This chain is Carbamoyl phosphate synthase large chain, found in Thermus thermophilus (strain ATCC 27634 / DSM 579 / HB8).